Consider the following 134-residue polypeptide: Small ribosomal subunit protein bS6 (134 aa).

The segment at 99–134 (EPSAMMQKRDRDERKDRERGRRRDDDGYVGERNEEG) is disordered. Positions 105–134 (QKRDRDERKDRERGRRRDDDGYVGERNEEG) are enriched in basic and acidic residues.

It belongs to the bacterial ribosomal protein bS6 family.

In terms of biological role, binds together with bS18 to 16S ribosomal RNA. The polypeptide is Small ribosomal subunit protein bS6 (Methylobacterium sp. (strain 4-46)).